The chain runs to 372 residues: Cyanuric acid amidohydrolase (372 aa).

Residues 1–105 (MPTTLRRAHV…IVFEAREVDE (105 aa)) are RU A. Residues Arg-56 and 84–85 (SG) contribute to the substrate site. Positions 115–252 (SLALGRARTP…HEIMVAGMSR (138 aa)) are RU B. Residue Lys-165 is part of the active site. Residues Arg-197 and 235-236 (SG) each bind substrate. Ser-235 (nucleophile) is an active-site residue. The segment at 258-372 (LAIDHGVMRD…GPVAIIVERT (115 aa)) is RU C. Position 305 (Glu-305) interacts with Mg(2+). Residues Arg-332 and 351–352 (SG) contribute to the substrate site. 5 residues coordinate Mg(2+): Ala-354, Gln-357, Gly-358, Pro-359, and Gly-362.

This sequence belongs to the cyclic amide hydrolase (CyAH) family. As to quaternary structure, homotetramer.

It carries out the reaction cyanurate + H2O = 1-carboxybiuret + H(+). Its pathway is xenobiotic degradation; atrazine degradation; biuret from cyanurate: step 1/1. Inhibited by barbituric acid. Its function is as follows. Responsible for the hydrolysis of cyanuric acid, an intermediate formed during catabolism of s-triazine based compounds in herbicides such as atrazine and polymers such as melamine. Catalyzes the hydrolytic opening of the s-triazine ring of cyanuric acid (2,4,6-trihydroxy-s-triazine) to yield carbon dioxide and carboxybiuret, which spontaneously decarboxylates to biuret. The protein is Cyanuric acid amidohydrolase of Bradyrhizobium sp. (strain ORS 375).